The sequence spans 130 residues: D-ribose pyranase (130 aa).

H20 acts as the Proton donor in catalysis. Residues D28, H97, and 119–121 (YAN) each bind substrate.

This sequence belongs to the RbsD / FucU family. RbsD subfamily. As to quaternary structure, homodecamer.

The protein resides in the cytoplasm. It catalyses the reaction beta-D-ribopyranose = beta-D-ribofuranose. The protein operates within carbohydrate metabolism; D-ribose degradation; D-ribose 5-phosphate from beta-D-ribopyranose: step 1/2. Catalyzes the interconversion of beta-pyran and beta-furan forms of D-ribose. The sequence is that of D-ribose pyranase from Paracidovorax citrulli (strain AAC00-1) (Acidovorax citrulli).